Here is a 965-residue protein sequence, read N- to C-terminus: MTEHESLGLEQNQDGGDTYRHHNLSDGCISSVEDANEQPSSYEEESDDDMQYYERAIQEISSGDSYVCMICTVEMDYTCQMFACKRCYRVFDYGCIREWALKSTEKTVDRIWKCPNCYYVSKRVPVKNRPTCWCGKVVNPDPNPLDPNSCGQTCNASTCMHGCSKICHLGPHPECTRMVEIMCHCGKHSKSIFCYQSKVMKKNFNCQEVCGLPLSCSIHTCKKKCHPGLCGPCPEMIISKDSPKKQIKCYCGNHTRANIKCSETKFPKSGKSSKDENGNRWIGVFACADNRVVDYSCRKHSFIESCISPPTINGEKACPFLPSSLKTCPCGRTALEELTKPRKHCDDPIPTCDSRCGKPLKCGKHSCPFTCHDKACMEPCLQIDSVKCACEQSTFSVPCGFQGRPRCNIKCESLMSCRRHRCTDRCCSGRPSAIRRKKNLFRTQDLLDESLVEAKHICLKPCNLTLSCGIHKCQRKCHPGKCPPCLESDSNDLVCPCGNTVVPAPVRCGTKLPTCNHPCIKVVRGESTCGHKPMPHTCHSLDVSCPPCTETVFKPCKCGKKTKVRTVCFQTDVSCGIKCGIPLSYCYHTCQKTCHLPGNCQKVCKQTCGQKRLNCNHECPKPCHGKTECPDLPCATLVKIYCKCGRIKKSVTCGAKSDRVSVTESSVLDCNEECEALKRLKELKEAFGIKEETNNFTSNELDALKKLVSVATTFEELQLPFTEAALSVYSKQERWCSQIEAILNKLMDDKTRSSLHFKPMRPPQRHFIRELAKAYGLYSESQDREPMRSVFIKKEDNGASNKPVLSLAEAYPLYESFKQLQKERKAQEFQARTTAKLINFEVQDTEPKVEVAKKNGFLVQNLVAGNTAEDLRRFFEPHLKHTLVVNPQYLILDDGKTALVYPENYETASVNTERDMELLVGHFDFMAKEAFLADSISLCSTEEELERRLDTPVIQEDSPVMDNNT.

Residues 68-118 (CMICTVEMDYTCQMFACKRCYRVFDYGCIREWALKSTEKTVDRIWKCPNCY) form an RING-type; degenerate zinc finger. 5 consecutive NF-X1-type zinc fingers follow at residues 159–177 (CMHG…ECTR), 216–235 (CSIH…PCPE), 362–382 (CGKH…PCLQ), 468–487 (CGIH…PCLE), and 586–606 (CYHT…VCKQ). In terms of domain architecture, R3H spans 733–796 (ERWCSQIEAI…MRSVFIKKED (64 aa)). The residue at position 951 (Thr951) is a Phosphothreonine. Position 958 is a phosphoserine (Ser958).

The protein belongs to the NFX1 family. As to quaternary structure, interacts with FPR1.

It is found in the cytoplasm. It localises to the nucleus. Its function is as follows. May play a role in transcription regulation. This Saccharomyces cerevisiae (strain ATCC 204508 / S288c) (Baker's yeast) protein is FKBP12-associated protein 1 (FAP1).